We begin with the raw amino-acid sequence, 709 residues long: MTINTDDQYADGESKTTISSNRRYSTSSFQDQSMEDDGINATLTNDKATLIQVWRPKSYGSVKGQIPAQDRLTYTWREIDVFGQAAIDGKSREPLCSRLRHCFTRQRLVKDFNPRKHLLKNVTGVARSGELLAVMGSSGAGKTTLLNELAFRSPPGVKISPNAIRTLNGVPVTAEQMRARCAYVQQDDLFIPSLTTKEHLMFQAMLRMGRDVPATPIKMHRVDEVLQELSLVKCADTIIGVAGRVKGLSGGERKRTAFRSETLTDPHLLLCDEPTSSLDSFMAQSVLQVLKGMAMKGKTIILTIHQPSSELYCLFDRILLVAEGVAFLGSPYQSADFFSQLGIPCPPNYNPADFYVQMLAIAPNKETECRETIKKICDSFAVSPIARDIIETASQVNGDGGIELTRTKHTTDPYFLQPMEGVDSTGYRASWWTQFYCILWRSWLSVLKDPMLVKVRLLQTAMVASLIGSIYFGQVLDQDGVMNINGSLFLFLTNMTFQNVFAVINVFSAELPVFLREKRSRLYRVDTYFLGKTIAELPLFIAVPFVFTSITYPMIGLKAAISHYLTTLFIVTLVANVSTSFGYLISCASSSISMALSVGPPVVIPFLIFGGFFLNSASVPAYFKYLSYLSWFRYANEALLINQWADHRDGEIGCTRANVTCPASGEIILETFNFRVEDFALDIGCLFALIVLFRLGALFCLWLRSRSKE.

The disordered stretch occupies residues 1–35 (MTINTDDQYADGESKTTISSNRRYSTSSFQDQSME). The segment covering 15–32 (KTTISSNRRYSTSSFQDQ) has biased composition (polar residues). The ABC transporter domain maps to 103–348 (FTRQRLVKDF…SQLGIPCPPN (246 aa)). Residues 136–143 (GSSGAGKT) and 292–299 (GMAMKGKT) each bind ATP. A helical membrane pass occupies residues 457 to 475 (LLQTAMVASLIGSIYFGQV). Asn-485 carries N-linked (GlcNAc...) asparagine glycosylation. 4 helical membrane passes run 487-507 (SLFL…INVF), 537-555 (LPLF…YPMI), 564-585 (YLTT…GYLI), and 598-616 (VGPP…FLNS). A glycan (N-linked (GlcNAc...) asparagine) is linked at Asn-658. A helical membrane pass occupies residues 681–700 (LDIGCLFALIVLFRLGALFC).

This sequence belongs to the ABC transporter superfamily. ABCG family. Eye pigment precursor importer (TC 3.A.1.204) subfamily.

The protein localises to the membrane. May be part of a membrane-spanning permease system necessary for the transport of pigment precursors into pigment cells responsible for eye color. The protein is Protein white (W) of Anopheles albimanus (New world malaria mosquito).